The following is a 215-amino-acid chain: UPF0056 membrane protein YhcE (215 aa).

The next 6 helical transmembrane spans lie at 14–34 (FFIG…FISM), 54–74 (VAII…LFGI), 81–101 (IAGG…KLGE), 120–140 (VVPL…TIVW), 147–167 (ISYL…CWGL), and 189–209 (IMGL…IKGI).

This sequence belongs to the UPF0056 (MarC) family.

Its subcellular location is the cell membrane. The polypeptide is UPF0056 membrane protein YhcE (ychE) (Escherichia coli (strain K12)).